We begin with the raw amino-acid sequence, 238 residues long: tRNA (guanine-N(7)-)-methyltransferase (238 aa).

S-adenosyl-L-methionine is bound by residues Glu-68, Glu-93, Asp-120, and Asp-143. Asp-143 is a catalytic residue. Residues Lys-147, Asp-179, and 216-219 each bind substrate; that span reads TKFE.

This sequence belongs to the class I-like SAM-binding methyltransferase superfamily. TrmB family.

It catalyses the reaction guanosine(46) in tRNA + S-adenosyl-L-methionine = N(7)-methylguanosine(46) in tRNA + S-adenosyl-L-homocysteine. Its pathway is tRNA modification; N(7)-methylguanine-tRNA biosynthesis. In terms of biological role, catalyzes the formation of N(7)-methylguanine at position 46 (m7G46) in tRNA. The sequence is that of tRNA (guanine-N(7)-)-methyltransferase from Aliivibrio salmonicida (strain LFI1238) (Vibrio salmonicida (strain LFI1238)).